The primary structure comprises 408 residues: Succinylornithine transaminase (408 aa).

K252 carries the post-translational modification N6-(pyridoxal phosphate)lysine.

It belongs to the class-III pyridoxal-phosphate-dependent aminotransferase family. AstC subfamily. Pyridoxal 5'-phosphate is required as a cofactor.

The catalysed reaction is N(2)-succinyl-L-ornithine + 2-oxoglutarate = N-succinyl-L-glutamate 5-semialdehyde + L-glutamate. Its pathway is amino-acid degradation; L-arginine degradation via AST pathway; L-glutamate and succinate from L-arginine: step 3/5. Functionally, catalyzes the transamination of N(2)-succinylornithine and alpha-ketoglutarate into N(2)-succinylglutamate semialdehyde and glutamate. Can also act as an acetylornithine aminotransferase. This Salmonella typhi protein is Succinylornithine transaminase.